The chain runs to 283 residues: Bifunctional protein FolD (283 aa).

NADP(+)-binding positions include 163–165 (GRS), Ser-188, and Ile-229.

Belongs to the tetrahydrofolate dehydrogenase/cyclohydrolase family. Homodimer.

It carries out the reaction (6R)-5,10-methylene-5,6,7,8-tetrahydrofolate + NADP(+) = (6R)-5,10-methenyltetrahydrofolate + NADPH. The enzyme catalyses (6R)-5,10-methenyltetrahydrofolate + H2O = (6R)-10-formyltetrahydrofolate + H(+). It participates in one-carbon metabolism; tetrahydrofolate interconversion. Functionally, catalyzes the oxidation of 5,10-methylenetetrahydrofolate to 5,10-methenyltetrahydrofolate and then the hydrolysis of 5,10-methenyltetrahydrofolate to 10-formyltetrahydrofolate. The polypeptide is Bifunctional protein FolD (Campylobacter fetus subsp. fetus (strain 82-40)).